We begin with the raw amino-acid sequence, 241 residues long: High mobility group B protein 7 (241 aa).

Composition is skewed to polar residues over residues 1 to 11 (MAGPSTTSNAP) and 20 to 29 (ETSSNTSTTL). 3 disordered regions span residues 1 to 30 (MAGP…TTLR), 75 to 116 (TQAE…NKPK), and 174 to 241 (EYNK…LDDY). Over residues 77–90 (AEAKKKPAEKKKTT) the composition is skewed to basic and acidic residues. The segment at residues 115 to 183 (PKRPLTAFFI…EYNKSLESND (69 aa)) is a DNA-binding region (HMG box). 2 stretches are compositionally biased toward acidic residues: residues 182 to 221 (NDAD…ENTD) and 229 to 241 (GKEE…LDDY).

Belongs to the HMGB family. Phosphorylated. In terms of tissue distribution, expressed at low levels in lateral roots, root tips, cotyledons, leaves and flowers (including pedicels, but excluding styles).

The protein resides in the nucleus. Its function is as follows. Binds preferentially double-stranded supercoiled DNA. Required for karyogamy during female gametophyte development, when the two polar nuclei fuse to form the diploid central cell nucleus. This chain is High mobility group B protein 7 (HMGB7), found in Arabidopsis thaliana (Mouse-ear cress).